A 141-amino-acid polypeptide reads, in one-letter code: Hemoglobin subunit alpha-A/Q/R/T (141 aa).

The Globin domain occupies 1–141 (VLSPADKTNV…VSTVLTSKYR (141 aa)). S3 is subject to Phosphoserine. K7 carries the N6-succinyllysine modification. T8 is modified (phosphothreonine). K11 is modified (N6-succinyllysine). K16 is modified (N6-acetyllysine; alternate). K16 is modified (N6-succinyllysine; alternate). Y24 bears the Phosphotyrosine mark. Residue S35 is modified to Phosphoserine. At K40 the chain carries N6-succinyllysine. At S49 the chain carries Phosphoserine. H58 is an O2 binding site. H87 contacts heme b. The residue at position 102 (S102) is a Phosphoserine. T108 is modified (phosphothreonine). Residues S124 and S131 each carry the phosphoserine modification. 2 positions are modified to phosphothreonine: T134 and T137. At S138 the chain carries Phosphoserine.

It belongs to the globin family. Heterotetramer of two alpha chains and two beta chains. Red blood cells.

Functionally, involved in oxygen transport from the lung to the various peripheral tissues. The polypeptide is Hemoglobin subunit alpha-A/Q/R/T (Macaca fascicularis (Crab-eating macaque)).